The sequence spans 206 residues: Ribosomal RNA large subunit methyltransferase E (206 aa).

Gly-60, Trp-62, Asp-80, Asp-96, and Asp-121 together coordinate S-adenosyl-L-methionine. The active-site Proton acceptor is Lys-161.

The protein belongs to the class I-like SAM-binding methyltransferase superfamily. RNA methyltransferase RlmE family.

It is found in the cytoplasm. It catalyses the reaction uridine(2552) in 23S rRNA + S-adenosyl-L-methionine = 2'-O-methyluridine(2552) in 23S rRNA + S-adenosyl-L-homocysteine + H(+). Functionally, specifically methylates the uridine in position 2552 of 23S rRNA at the 2'-O position of the ribose in the fully assembled 50S ribosomal subunit. This Saccharophagus degradans (strain 2-40 / ATCC 43961 / DSM 17024) protein is Ribosomal RNA large subunit methyltransferase E.